A 122-amino-acid polypeptide reads, in one-letter code: Holo-[acyl-carrier-protein] synthase (122 aa).

D9 and E58 together coordinate Mg(2+).

This sequence belongs to the P-Pant transferase superfamily. AcpS family. Requires Mg(2+) as cofactor.

Its subcellular location is the cytoplasm. The catalysed reaction is apo-[ACP] + CoA = holo-[ACP] + adenosine 3',5'-bisphosphate + H(+). Its function is as follows. Transfers the 4'-phosphopantetheine moiety from coenzyme A to a Ser of acyl-carrier-protein. This chain is Holo-[acyl-carrier-protein] synthase, found in Chlamydia felis (strain Fe/C-56) (Chlamydophila felis).